The chain runs to 197 residues: Imidazoleglycerol-phosphate dehydratase (197 aa).

This sequence belongs to the imidazoleglycerol-phosphate dehydratase family.

It is found in the cytoplasm. The enzyme catalyses D-erythro-1-(imidazol-4-yl)glycerol 3-phosphate = 3-(imidazol-4-yl)-2-oxopropyl phosphate + H2O. It functions in the pathway amino-acid biosynthesis; L-histidine biosynthesis; L-histidine from 5-phospho-alpha-D-ribose 1-diphosphate: step 6/9. The polypeptide is Imidazoleglycerol-phosphate dehydratase (Teredinibacter turnerae (strain ATCC 39867 / T7901)).